A 307-amino-acid chain; its full sequence is HTH-type transcriptional regulator DmlR (307 aa).

Positions 5–62 constitute an HTH lysR-type domain; that stretch reads PLLNDLRVFMLVARRAGFAAVAEELGVSPAFVSKRIALLEQTLNVVLLHRTTRRVTIT. Residues 22–41 constitute a DNA-binding region (H-T-H motif); that stretch reads FAAVAEELGVSPAFVSKRIA.

Belongs to the LysR transcriptional regulatory family.

Its function is as follows. Transcriptional regulator required for the aerobic growth on D-malate as the sole carbon source. Induces the expression of dmlA in response to D-malate or L- or meso-tartrate. Negatively regulates its own expression. This is HTH-type transcriptional regulator DmlR (dmlR) from Escherichia coli (strain K12).